The sequence spans 602 residues: NAD-reducing hydrogenase HoxS subunit alpha (602 aa).

219–228 is an NAD(+) binding site; the sequence is GRGGAGFSTG. 332 to 379 serves as a coordination point for FMN; it reads GAGAYICGDESALIESCEGKRGTPRVKPPFPVQQGYLGKPTSVNNVET. [4Fe-4S] cluster is bound by residues Cys-499, Cys-502, Cys-505, and Cys-545.

Belongs to the complex I 51 kDa subunit family. As to quaternary structure, tetramer of an alpha and a gamma subunits (flavin-containing dimer), and a delta and a nickel-containing beta subunit (hydrogenase dimer). FMN is required as a cofactor. It depends on [4Fe-4S] cluster as a cofactor.

The protein localises to the cytoplasm. It catalyses the reaction H2 + NAD(+) = NADH + H(+). Its function is as follows. Subunits alpha and gamma of HoxS constitute an NADH--oxidoreductase. The chain is NAD-reducing hydrogenase HoxS subunit alpha (hoxF) from Cupriavidus necator (strain ATCC 17699 / DSM 428 / KCTC 22496 / NCIMB 10442 / H16 / Stanier 337) (Ralstonia eutropha).